The following is a 53-amino-acid chain: UPF0391 membrane protein BURPS1106A_A2993 (53 aa).

2 consecutive transmembrane segments (helical) span residues 5–25 (ALIF…GIAA) and 30–50 (IAKI…VLGV).

The protein belongs to the UPF0391 family.

It localises to the cell membrane. This is UPF0391 membrane protein BURPS1106A_A2993 from Burkholderia pseudomallei (strain 1106a).